Reading from the N-terminus, the 85-residue chain is Translational regulator CsrA (85 aa).

This sequence belongs to the CsrA/RsmA family. As to quaternary structure, homodimer; the beta-strands of each monomer intercalate to form a hydrophobic core, while the alpha-helices form wings that extend away from the core.

The protein localises to the cytoplasm. Its function is as follows. A translational regulator that binds mRNA to regulate translation initiation and/or mRNA stability. Usually binds in the 5'-UTR at or near the Shine-Dalgarno sequence preventing ribosome-binding, thus repressing translation. Its main target seems to be the major flagellin gene, while its function is anatagonized by FliW. This is Translational regulator CsrA from Leifsonia xyli subsp. xyli (strain CTCB07).